A 58-amino-acid chain; its full sequence is Small ribosomal subunit protein bS21A (58 aa).

Positions 38–58 are disordered; sequence YEKPSLRRKRKAEAARKGGRN. Residues 49–58 are compositionally biased toward basic and acidic residues; it reads AEAARKGGRN.

This sequence belongs to the bacterial ribosomal protein bS21 family.

This Trichormus variabilis (strain ATCC 29413 / PCC 7937) (Anabaena variabilis) protein is Small ribosomal subunit protein bS21A.